The sequence spans 98 residues: MSAGVRSEPMKVVFINTQYVQTDARSFKTIVQELTGKNAVVADGPYEFSGQGYGGKDSSQRFCGVGKEAERGVETTEFDSFFREMPPVGELYNLWSDH.

Residues 27–36 (FKTIVQELTG) carry the VQ motif.

As to quaternary structure, interacts with WRKY33.

Its subcellular location is the nucleus. Functionally, may modulate WRKY transcription factor activities. This Arabidopsis thaliana (Mouse-ear cress) protein is VQ motif-containing protein 1.